The primary structure comprises 241 residues: Pre-rRNA-processing protein pno1 (241 aa).

Positions 48–71 (APAKTSAEKKRGAKPQMRRVPIPP) are disordered. The residue at position 52 (Thr-52) is a Phosphothreonine. One can recognise a KH domain in the interval 162–214 (GDHLSRAIGRIAGQGGKTKFAIENASRTRIVLADSKIHILGGFTNIRIAKDAV).

It belongs to the PNO1 family. In terms of assembly, component of the small ribosomal subunit, ribosomal RNA processing complex (SSU RRP complex).

The protein resides in the cytoplasm. The protein localises to the nucleus. It is found in the nucleolus. Required for small ribosomal subunit (SSU) synthesis. Has a role in the processing of early nucleolar and late cytoplasmic pre-RNA species. In Schizosaccharomyces pombe (strain 972 / ATCC 24843) (Fission yeast), this protein is Pre-rRNA-processing protein pno1 (rbp28).